The sequence spans 632 residues: Fem-3 mRNA-binding factor 2 (632 aa).

Over residues 1-11 (MDQSKMRRTNQ) the composition is skewed to basic residues. Residues 1-37 (MDQSKMRRTNQFRKTSQKPPSTGIDSYPTPAQSPMAQ) form a disordered region. The span at 12 to 35 (FRKTSQKPPSTGIDSYPTPAQSPM) shows a compositional bias: polar residues. The region spanning 162-566 (TRSNNVLPTW…KMIETLANLR (405 aa)) is the PUM-HD domain. Pumilio repeat units follow at residues 187 to 225 (EVLD…QLFE), 226 to 264 (QVIG…GYTK), 271 to 307 (NFIS…KLVQ), 308 to 332 (ALPR…QKVV), 345 to 384 (DFVA…DLTS), 400 to 436 (SVTN…CIIE), 438 to 473 (CLMR…EMMD), and 484 to 521 (DTGK…RQTK). The tract at residues 609 to 632 (MLEPRSNKSSVSVKFSSSGSHGDD) is disordered. Residues 615-632 (NKSSVSVKFSSSGSHGDD) show a composition bias toward low complexity.

In terms of assembly, interacts (via C-terminus) with gld-3 isoform A in an RNA-independent manner. Interacts with dlc-1, and is required for the localization of fbf-2 to P granules. Interacts (via RNA-binding domain) with lst-1, probably displaces bound auto-inhibitory C-terminal tail and alters its RNA-binding affinity. Expressed specifically in the germline (at protein level).

The protein localises to the cytoplasm. Its subcellular location is the cytoplasmic granule. RNA-binding protein that binds to the consensus sequence 5'-UGUGCCAUA-3' in mRNA 3'-UTRs. Involved in the control of stem cells and sex determination in the C.elegans hermaphrodite germline. May also play a role in the hermaphrodite germline proliferation and oogenesis. By binding to the 3'-UTR, represses phosphatase lip-1 expression in the distal part of the germline mitotic zone. Binds specifically to the regulatory region of fem-3 3'-UTR and mediates the sperm/oocyte switch. Negatively regulates gld-3 expression possibly by directly binding to two sites within the gld-3 isoform b 3'-UTR. Suppresses germline tumor formation by preventing the dedifferentiation of secondary spermatocytes. C-terminal disordered region probably auto-inhibits RNA binding; auto-inhibition may be reversed by interaction with lst-1. In Caenorhabditis elegans, this protein is Fem-3 mRNA-binding factor 2.